The chain runs to 250 residues: Small ribosomal subunit protein uS2 (250 aa).

Belongs to the universal ribosomal protein uS2 family.

The chain is Small ribosomal subunit protein uS2 from Marinobacter nauticus (strain ATCC 700491 / DSM 11845 / VT8) (Marinobacter aquaeolei).